We begin with the raw amino-acid sequence, 712 residues long: Cyclomaltodextrin glucanotransferase (712 aa).

A signal peptide spans M1–A27. The A1 stretch occupies residues A28–P165. Ca(2+)-binding residues include D54, N56, N59, and N60. C70 and C77 are oxidised to a cystine. Ca(2+) contacts are provided by G78 and D80. Y127–W128 contributes to the substrate binding site. N166 serves as a coordination point for Ca(2+). The segment at N166 to H229 is b. H167 contributes to the substrate binding site. I217 contributes to the Ca(2+) binding site. N220–D223 is a binding site for substrate. D226 provides a ligand contact to Ca(2+). The tract at residues N230–Y433 is A2. R254 contributes to the substrate binding site. The active-site Nucleophile is D256. K259–H260 provides a ligand contact to substrate. A Ca(2+)-binding site is contributed by H260. E284 acts as the Proton donor in catalysis. The substrate site is built by H354, D398, and R402. Positions G434–D522 are c. Residues A523–L608 form a d region. In terms of domain architecture, IPT/TIG spans P526–E606. The CBM20 domain maps to V607–P712. Residues T609–P712 form an e region.

This sequence belongs to the glycosyl hydrolase 13 family. As to quaternary structure, monomer. Requires Ca(2+) as cofactor.

The protein resides in the secreted. It carries out the reaction Cyclizes part of a (1-&gt;4)-alpha-D-glucan chain by formation of a (1-&gt;4)-alpha-D-glucosidic bond.. The polypeptide is Cyclomaltodextrin glucanotransferase (cgt) (Bacillus sp. (strain 38-2)).